The primary structure comprises 1031 residues: Error-prone DNA polymerase (1031 aa).

This sequence belongs to the DNA polymerase type-C family. DnaE2 subfamily.

The protein resides in the cytoplasm. The enzyme catalyses DNA(n) + a 2'-deoxyribonucleoside 5'-triphosphate = DNA(n+1) + diphosphate. In terms of biological role, DNA polymerase involved in damage-induced mutagenesis and translesion synthesis (TLS). It is not the major replicative DNA polymerase. The protein is Error-prone DNA polymerase of Pseudomonas syringae pv. tomato (strain ATCC BAA-871 / DC3000).